Here is a 151-residue protein sequence, read N- to C-terminus: Large ribosomal subunit protein bL9 (151 aa).

It belongs to the bacterial ribosomal protein bL9 family.

Binds to the 23S rRNA. The chain is Large ribosomal subunit protein bL9 from Carboxydothermus hydrogenoformans (strain ATCC BAA-161 / DSM 6008 / Z-2901).